Reading from the N-terminus, the 100-residue chain is U-myrmeciitoxin(01)-Mg7c (100 aa).

The signal sequence occupies residues 1 to 17 (MKLSYLSLALAIILVLA). Positions 18–50 (IVYSPHMEVKALADAEPDAIGFADAFGEADAEP) are excised as a propeptide. A glycan (O-linked (GalNAc...) serine) is linked at Ser85. O-linked (GalNAc...) threonine glycans are attached at residues Thr94 and Thr95.

Belongs to the formicidae venom precursor-01 superfamily. Glycosylation is critical to maintaining the aqueous solubility of this protein, but does not directly contribute to its activity. In terms of tissue distribution, expressed by the venom gland.

Its subcellular location is the secreted. It is found in the target cell membrane. Functionally, neurotoxin that triggers pain behavior and inflammation in mammals, and is paralytic and lethal to insects. Causes a time-dependent increase in cell leak current. May act by targeting membranes. The chain is U-myrmeciitoxin(01)-Mg7c from Myrmecia gulosa (Red bulldog ant).